The primary structure comprises 489 residues: Cytochrome P450 2C70 (489 aa).

Positions 1–27 (MALFIFLGIWLSCFLFLFLWNQHRGRG) are cleaved as a signal peptide. Cys434 serves as a coordination point for heme.

This sequence belongs to the cytochrome P450 family. It depends on heme as a cofactor. Expressed in liver.

It is found in the endoplasmic reticulum membrane. The protein resides in the microsome membrane. It carries out the reaction chenodeoxycholate + reduced [NADPH--hemoprotein reductase] + O2 = alpha-muricholate + oxidized [NADPH--hemoprotein reductase] + H2O + H(+). It catalyses the reaction ursodeoxycholate + reduced [NADPH--hemoprotein reductase] + O2 = beta-muricholate + oxidized [NADPH--hemoprotein reductase] + H2O + H(+). A cytochrome P450 monooxygenase involved in muricholic acid (MCA) synthesis. Hydroxylates at the 6-beta position two major bile acids, chenodeoxycholic acid (CDCA) and ursodeoxycholic acid (UDCA) to form alpha-MCA and beta-MCA, respectively. May regulate NR1H4/farnesoid X receptor signaling, as taurine-conjugated MCAs are antagonists of NR1H4. Mechanistically, uses molecular oxygen inserting one oxygen atom into a substrate, and reducing the second into a water molecule, with two electrons provided by NADPH via cytochrome P450 reductase (CPR; NADPH-ferrihemoprotein reductase). The chain is Cytochrome P450 2C70 from Mus musculus (Mouse).